The primary structure comprises 430 residues: Tol-Pal system protein TolB (430 aa).

A signal peptide spans 1-21 (MKQALRVAFGFLMLWAAVLHA).

This sequence belongs to the TolB family. As to quaternary structure, the Tol-Pal system is composed of five core proteins: the inner membrane proteins TolA, TolQ and TolR, the periplasmic protein TolB and the outer membrane protein Pal. They form a network linking the inner and outer membranes and the peptidoglycan layer.

The protein localises to the periplasm. Its function is as follows. Part of the Tol-Pal system, which plays a role in outer membrane invagination during cell division and is important for maintaining outer membrane integrity. TolB occupies a key intermediary position in the Tol-Pal system because it communicates directly with both membrane-embedded components, Pal in the outer membrane and TolA in the inner membrane. This Salmonella typhi protein is Tol-Pal system protein TolB.